A 124-amino-acid chain; its full sequence is MPTVKQLIRNARQPIRNARKSAALKGCPQRRGTCARVYTINPKKPNSALRKVARVRLTSGFEITAYIPGIGHNLQEHSVVLVRGGRVKDLPGVRYRIIRGTLDAVAVKNRQQGRSKYGAKKPKK.

The protein belongs to the universal ribosomal protein uS12 family. In terms of assembly, part of the 30S ribosomal subunit.

The protein localises to the plastid. It localises to the chloroplast. In terms of biological role, with S4 and S5 plays an important role in translational accuracy. Located at the interface of the 30S and 50S subunits. The sequence is that of Small ribosomal subunit protein uS12cz/uS12cy (rps12-A) from Zea mays (Maize).